The sequence spans 115 residues: Con-Ins G1b (115 aa).

The signal sequence occupies residues 1 to 24 (MTTSFYFLLMALGLLLYVCQSSFG). Residues 25–29 (NQHTR) constitute a propeptide that is removed on maturation. Residue Pro-34 is modified to 4-hydroxyproline; partial. 3 cysteine pairs are disulfide-bonded: Cys-38/Cys-101, Cys-50/Cys-114, and Cys-100/Cys-105. Glu-41 carries the post-translational modification 4-carboxyglutamate. A propeptide spans 52 to 94 (RKRNDAGEKRGRASPLWQRRGFLSKLKARAKRNGAFHLPRDGR) (c peptide). Glu-98 carries the post-translational modification 4-carboxyglutamate. Pro-104 is modified (4-hydroxyproline; partial). Glu-109 carries the post-translational modification 4-carboxyglutamate; partial. Position 114 is a cysteine amide (Cys-114).

Belongs to the insulin family. In terms of assembly, heterodimer of A and B chains; disulfide-linked. As to expression, expressed by the venom gland.

It localises to the secreted. This venom insulin, from a fish-hunting cone snail, facilitates prey capture by rapidly inducing hypoglycemic shock. It is one of the smallest known insulin found in nature and lacks the C-terminal segment of the B chain that, in human insulin, mediates engagement of the insulin receptor (INSR) and assembly of the hormone's hexameric storage form. Despite lacking this segment, it both binds and activates human insulin receptor (long isoform (HIR-B) of INSR) with only a 10-fold lower potency. In vivo, intraperitoneal injection of this peptide into zebrafish lowers blood glucose with the same potency than human insulin. In addition, when applied to water, this peptide reduces overall locomotor activity of zebrafish larvae, observed as a significant decrease in the percentage of time spent swimming and movement frequency. The chain is Con-Ins G1b from Conus geographus (Geography cone).